The following is a 238-amino-acid chain: Survival of motor neuron-related-splicing factor 30 (238 aa).

The Tudor domain occupies 72-132; it reads SWKVGDKCMA…KPVEEGRKAK (61 aa). The Nuclear localization signal motif lies at 142 to 160; that stretch reads KKEMIAQQREYKKKKALKK. Ser201 is modified (phosphoserine). Position 219 is an N6-acetyllysine (Lys219).

This sequence belongs to the SMN family. Associates with spliceosomes. Associates with U4/U5/U6 tri-snRNP and with U2 snRNP.

It is found in the nucleus speckle. The protein localises to the nucleus. Its subcellular location is the cajal body. Involved in spliceosome assembly. This chain is Survival of motor neuron-related-splicing factor 30 (SMNDC1), found in Bos taurus (Bovine).